Reading from the N-terminus, the 141-residue chain is Large ribosomal subunit protein uL11 (141 aa).

The protein belongs to the universal ribosomal protein uL11 family. In terms of assembly, part of the ribosomal stalk of the 50S ribosomal subunit. Interacts with L10 and the large rRNA to form the base of the stalk. L10 forms an elongated spine to which L12 dimers bind in a sequential fashion forming a multimeric L10(L12)X complex. Post-translationally, one or more lysine residues are methylated.

Forms part of the ribosomal stalk which helps the ribosome interact with GTP-bound translation factors. This is Large ribosomal subunit protein uL11 from Thermotoga neapolitana (strain ATCC 49049 / DSM 4359 / NBRC 107923 / NS-E).